The primary structure comprises 132 residues: Small ribosomal subunit protein uS8 (132 aa).

The protein belongs to the universal ribosomal protein uS8 family. As to quaternary structure, part of the 30S ribosomal subunit. Contacts proteins S5 and S12.

In terms of biological role, one of the primary rRNA binding proteins, it binds directly to 16S rRNA central domain where it helps coordinate assembly of the platform of the 30S subunit. The sequence is that of Small ribosomal subunit protein uS8 from Limosilactobacillus fermentum (strain NBRC 3956 / LMG 18251) (Lactobacillus fermentum).